A 132-amino-acid chain; its full sequence is Large ribosomal subunit protein uL22c (132 aa).

The protein belongs to the universal ribosomal protein uL22 family. In terms of assembly, part of the 50S ribosomal subunit.

It localises to the plastid. The protein resides in the chloroplast. In terms of biological role, this protein binds specifically to 23S rRNA. Its function is as follows. The globular domain of the protein is located near the polypeptide exit tunnel on the outside of the subunit, while an extended beta-hairpin is found that lines the wall of the exit tunnel in the center of the 70S ribosome. This chain is Large ribosomal subunit protein uL22c (rpl22), found in Populus trichocarpa (Western balsam poplar).